The chain runs to 508 residues: Catalase (508 aa).

Positions methionine 1–alanine 21 are cleaved as a signal peptide. Catalysis depends on residues histidine 72 and asparagine 145. A heme-binding site is contributed by tyrosine 353. A compositionally biased stretch (polar residues) spans proline 373 to leucine 392. Positions proline 373 to aspartate 396 are disordered.

Belongs to the catalase family. It depends on heme as a cofactor.

It localises to the periplasm. The enzyme catalyses 2 H2O2 = O2 + 2 H2O. In terms of biological role, decomposes hydrogen peroxide into water and oxygen; serves to protect cells from the toxic effects of hydrogen peroxide. This chain is Catalase, found in Vibrio vulnificus (strain YJ016).